The chain runs to 265 residues: Hydroxyethylthiazole kinase 1 (265 aa).

Residue Met-39 participates in substrate binding. The ATP site is built by Lys-115 and Thr-168. Gly-195 serves as a coordination point for substrate.

The protein belongs to the Thz kinase family. Mg(2+) serves as cofactor.

The catalysed reaction is 5-(2-hydroxyethyl)-4-methylthiazole + ATP = 4-methyl-5-(2-phosphooxyethyl)-thiazole + ADP + H(+). It participates in cofactor biosynthesis; thiamine diphosphate biosynthesis; 4-methyl-5-(2-phosphoethyl)-thiazole from 5-(2-hydroxyethyl)-4-methylthiazole: step 1/1. Its function is as follows. Catalyzes the phosphorylation of the hydroxyl group of 4-methyl-5-beta-hydroxyethylthiazole (THZ). The chain is Hydroxyethylthiazole kinase 1 from Clostridium botulinum (strain Loch Maree / Type A3).